The primary structure comprises 620 residues: Endoglucanase 21 (620 aa).

Residues 1–39 form a disordered region; it reads MYGRDPWGGPLEINAADSMTDDDRSRNLQDLDRATPSRP. Topologically, residues 1–70 are cytoplasmic; that stretch reads MYGRDPWGGP…DLGCILVSRK (70 aa). Over residues 21–39 the composition is skewed to basic and acidic residues; sequence DDDRSRNLQDLDRATPSRP. Residues 71 to 91 form a helical; Signal-anchor for type II membrane protein membrane-spanning segment; that stretch reads IFLWTLGTIVVTALLSGFITL. The Extracellular segment spans residues 92–620; the sequence is IVKTLPHHHH…TPPPPAPWTP (529 aa). N-linked (GlcNAc...) asparagine glycosylation is found at asparagine 108 and asparagine 134. Catalysis depends on aspartate 166, which acts as the Nucleophile. N-linked (GlcNAc...) asparagine glycosylation is found at asparagine 217, asparagine 325, asparagine 346, asparagine 409, asparagine 426, and asparagine 482. Catalysis depends on residues histidine 514 and aspartate 561. The N-linked (GlcNAc...) asparagine glycan is linked to asparagine 567. Glutamate 570 is a catalytic residue.

The protein belongs to the glycosyl hydrolase 9 (cellulase E) family. In terms of tissue distribution, expressed in conductive tissues of young roots, cotyledons, rosette leaves, cauline leaves and sepals. Expressed in the leaf trichome support cells.

The protein resides in the cell membrane. It catalyses the reaction Endohydrolysis of (1-&gt;4)-beta-D-glucosidic linkages in cellulose, lichenin and cereal beta-D-glucans.. The polypeptide is Endoglucanase 21 (KOR3) (Arabidopsis thaliana (Mouse-ear cress)).